We begin with the raw amino-acid sequence, 419 residues long: Double-stranded RNA-binding protein 1 (419 aa).

DRBM domains are found at residues 15–84 and 101–170; these read VFKS…ELAK and LCKN…AIQS. Positions 207-222 match the Bipartite nuclear localization motif; it reads KARKAQFKKKAQKGKR. A run of 6 repeats spans residues 247 to 274, 275 to 302, 303 to 330, 331 to 358, 359 to 386, and 387 to 414. The interval 247–414 is 6 X 28 AA repeats of E-K-I-E-T-T-P-N-L-E-[PS]-[PS]-S-C-M-[NS]-G-L-K-E-A-A-F-G-S-V-E-T; the sequence is EKIETTPNLE…KEAAFGSVET (168 aa).

Homodimer. Heterodimer with DRB2, DRB4 or DRB5. Interacts with SE and DCL1. Interacts with RCF3, RS40 and RS41. As to expression, expressed in rosette and cauline leaves, stems, roots, flowers and siliques.

It localises to the nucleus. The protein localises to the nucleus speckle. Its function is as follows. Double-stranded RNA-binding protein involved in RNA-mediated post-transcriptional gene silencing (PTGS). Functions in the microRNAs (miRNAs) biogenesis by assisting DICER-LIKE 1 (DCL1) in the accurate processing from primary miRNAs (pri-miRNAs) to miRNAs in the nucleus. Forms a complex with SERRATE (SE) and DCL1 to promote accurate processing of pri-miRNAs by DCL1. Binds and assist DCL1 for accurate processing of precursor miRNAs (pre-miRNA). Indirectly involved in the production of trans-acting small interfering RNAs (ta-siRNAs) derived from the TAS1, TAS2 or TAS3 endogenous transcripts by participating in the production of their initiating miRNAs. Involved with argonaute 1 (AGO1) in the guide strand selection from miRNA duplexes, presumably by directional loading of the miRNA duplex (guide stand and passenger strand) onto the RNA-induced silencing complex (RISC) for passenger strand degradation. Does not participate in sense transgene-induced post-transcriptional gene silencing (S-PTGS). Involved in several plant development aspects and response to hormones through its role in miRNAs processing. The protein is Double-stranded RNA-binding protein 1 (DRB1) of Arabidopsis thaliana (Mouse-ear cress).